The sequence spans 122 residues: MIQTESRLEVADNTGAREVMCIKVLGGSKRRYAGIGDIIKVTVKEATPRGRVKKGEIYNAVVVRTAKGVRRQDGSLIKFDGNAAVLLNNKLEPIGTRIFGPVTRELRSERFMKIVSLAPEVL.

This sequence belongs to the universal ribosomal protein uL14 family. Part of the 50S ribosomal subunit. Forms a cluster with proteins L3 and L19. In the 70S ribosome, L14 and L19 interact and together make contacts with the 16S rRNA in bridges B5 and B8.

Binds to 23S rRNA. Forms part of two intersubunit bridges in the 70S ribosome. The chain is Large ribosomal subunit protein uL14 from Burkholderia vietnamiensis (strain G4 / LMG 22486) (Burkholderia cepacia (strain R1808)).